The chain runs to 82 residues: UPF0213 protein MW0443 (82 aa).

Residues 2 to 77 (DSHFVYIVKC…KTYTRQKKLR (76 aa)) form the GIY-YIG domain.

It belongs to the UPF0213 family.

The protein is UPF0213 protein MW0443 of Staphylococcus aureus (strain MW2).